We begin with the raw amino-acid sequence, 212 residues long: Probable GTP-binding protein EngB (212 aa).

The 173-residue stretch at 38 to 210 (SLPEIAFVGK…KASLAKCIKP (173 aa)) folds into the EngB-type G domain. GTP is bound by residues 46-53 (GKSNVGKS), 73-77 (GRTRQ), 91-94 (DLPG), 158-161 (TKSD), and 189-191 (VSN). 2 residues coordinate Mg(2+): S53 and T75.

Belongs to the TRAFAC class TrmE-Era-EngA-EngB-Septin-like GTPase superfamily. EngB GTPase family. Mg(2+) is required as a cofactor.

In terms of biological role, necessary for normal cell division and for the maintenance of normal septation. The protein is Probable GTP-binding protein EngB of Rickettsia peacockii (strain Rustic).